A 352-amino-acid polypeptide reads, in one-letter code: MMKCLLVSSVEGYSGKSGIIIALGLKLREMGYEVGYFKALGVNTVKVGDRAVEEDSLITAKILGVEEDVCPVVLDRPYIDFATSVDPVVLRKAVLDRFTEVSEGKDVVIVEGSQNYRTGVAVGIDDASVAKMLSAKVLLVGKYVNDFVVDEVLAAKSAFGTMLEKVVFNQVSGYKMSYIEGIARKVLNEAGLDIVGAIPRNPVLAGLSVEEIREAVSGEYLIEPREEKMVEQVVIGAMSPQSALRYLREARNAALVTGGDRSDLLLTALEMPNVRCLILTGNLEPVQLVLTKAEERGVPVILTGHDTLTAVSRLESVFGRTRIRGEPKVGIMRELFESHVNVKTIIEYLGLD.

This sequence to Synechocystis PCC 6803 slr0039.

This is an uncharacterized protein from Archaeoglobus fulgidus (strain ATCC 49558 / DSM 4304 / JCM 9628 / NBRC 100126 / VC-16).